The chain runs to 580 residues: Peptidyl-prolyl cis-trans isomerase-like 2 (580 aa).

The U-box domain maps to Lys42–Lys115. Disordered stretches follow at residues Ile182–Ser201, Gln227–Ser259, Ser439–Pro459, Gln479–Thr530, and Phe553–Asp580. The PPIase cyclophilin-type domain occupies Gln309–Ile468. The segment covering Ser439–Pro457 has biased composition (polar residues). Positions Glu490 to Asp507 are enriched in basic and acidic residues.

The protein belongs to the cyclophilin-type PPIase family. PPIL2 subfamily.

It is found in the nucleus. It catalyses the reaction [protein]-peptidylproline (omega=180) = [protein]-peptidylproline (omega=0). The catalysed reaction is S-ubiquitinyl-[E2 ubiquitin-conjugating enzyme]-L-cysteine + [acceptor protein]-L-lysine = [E2 ubiquitin-conjugating enzyme]-L-cysteine + N(6)-ubiquitinyl-[acceptor protein]-L-lysine.. The protein operates within protein modification; protein ubiquitination. May catalyze the cis-trans isomerization of proline imidic peptide bonds in oligopeptides thereby assisting the folding of proteins. May also function as a chaperone, playing a role in intracellular transport of proteins. May also have a protein ubiquitin ligase activity acting as an E3 ubiquitin protein ligase or as a ubiquitin-ubiquitin ligase promoting elongation of ubiquitin chains on proteins. This chain is Peptidyl-prolyl cis-trans isomerase-like 2 (cyp8), found in Emericella nidulans (strain FGSC A4 / ATCC 38163 / CBS 112.46 / NRRL 194 / M139) (Aspergillus nidulans).